The primary structure comprises 335 residues: Trans-3-hydroxy-L-proline dehydratase (335 aa).

The active-site Proton acceptor is the C91. Substrate is bound by residues 92–93 (GH), D251, and 256–257 (GS).

This sequence belongs to the proline racemase family.

The catalysed reaction is trans-3-hydroxy-L-proline = 1-pyrroline-2-carboxylate + H2O. Its function is as follows. Catalyzes the dehydration of trans-3-hydroxy-L-proline (t3LHyp) to Delta(1)-pyrroline-2-carboxylate (Pyr2C). Is likely involved in a degradation pathway that converts t3LHyp to L-proline. Displays neither trans-4-hydroxy-L-proline (t4LHyp) epimerase nor proline racemase activity. This Burkholderia ambifaria (strain ATCC BAA-244 / DSM 16087 / CCUG 44356 / LMG 19182 / AMMD) (Burkholderia cepacia (strain AMMD)) protein is Trans-3-hydroxy-L-proline dehydratase.